The primary structure comprises 90 residues: Secretoglobin family 1D member 1 (90 aa).

Positions 1–21 (MRLSVCLLLLTLALCCYRANA) are cleaved as a signal peptide.

As to quaternary structure, heterodimer of a lipophilin A and a lipophilin C (mammaglobin B) monomer associated head to head. Expressed in lachrymal gland, thymus, kidney, testis, ovary and salivary gland.

Its subcellular location is the secreted. Its function is as follows. May bind androgens and other steroids, may also bind estramustine, a chemotherapeutic agent used for prostate cancer. May be under transcriptional regulation of steroid hormones. In Homo sapiens (Human), this protein is Secretoglobin family 1D member 1 (SCGB1D1).